The sequence spans 446 residues: Ribosomal protein uS12 methylthiotransferase RimO (446 aa).

One can recognise an MTTase N-terminal domain in the interval Leu4–Ser119. Cys13, Cys48, Cys82, Cys157, Cys161, and Cys164 together coordinate [4Fe-4S] cluster. The Radical SAM core domain occupies Thr143–Ser373. A TRAM domain is found at Lys376–Asp442.

This sequence belongs to the methylthiotransferase family. RimO subfamily. Requires [4Fe-4S] cluster as cofactor.

The protein localises to the cytoplasm. The catalysed reaction is L-aspartate(89)-[ribosomal protein uS12]-hydrogen + (sulfur carrier)-SH + AH2 + 2 S-adenosyl-L-methionine = 3-methylsulfanyl-L-aspartate(89)-[ribosomal protein uS12]-hydrogen + (sulfur carrier)-H + 5'-deoxyadenosine + L-methionine + A + S-adenosyl-L-homocysteine + 2 H(+). Functionally, catalyzes the methylthiolation of an aspartic acid residue of ribosomal protein uS12. The protein is Ribosomal protein uS12 methylthiotransferase RimO of Clostridium kluyveri (strain ATCC 8527 / DSM 555 / NBRC 12016 / NCIMB 10680 / K1).